Reading from the N-terminus, the 1385-residue chain is Defecation cycle abnormal dec-7 (1385 aa).

The N-terminal stretch at 1–19 (MWTARHAVALLVVLTYAYS) is a signal peptide. Asn-156 carries an N-linked (GlcNAc...) asparagine glycan. Residues 234-262 (SQTNYGAPNYQQAGAQSAANQQFSNPSQY) are disordered. The segment covering 242 to 261 (NYQQAGAQSAANQQFSNPSQ) has biased composition (low complexity). In terms of domain architecture, NIDO spans 285 to 450 (QIYGKRKKRQ…GRWIHRVDEV (166 aa)). 7 N-linked (GlcNAc...) asparagine glycosylation sites follow: Asn-313, Asn-386, Asn-413, Asn-458, Asn-480, Asn-562, and Asn-583. The AMOP domain occupies 681–840 (GRNWPIDMCI…DHCEFYYWRR (160 aa)). A VWFD domain is found at 852–1088 (AAGYIYGEPH…FWKIDGTNDK (237 aa)). 5 N-linked (GlcNAc...) asparagine glycosylation sites follow: Asn-909, Asn-921, Asn-975, Asn-1009, and Asn-1124. The Sushi domain maps to 1179-1238 (ISCGPLLKKEGVVKTPPAANYLDGDKVVFSCKPKYYIHGDIERVCRNGTWSPGWWAWCRD). 2 disulfides stabilise this stretch: Cys-1181–Cys-1223 and Cys-1209–Cys-1236. Residue Asn-1225 is glycosylated (N-linked (GlcNAc...) asparagine). A helical transmembrane segment spans residues 1251 to 1271 (LLSIFGISLIFVIFFCILWNI). Positions 1321–1385 (MNQPSRPIPS…GNMRFETSAI (65 aa)) are disordered.

In terms of tissue distribution, highly expressed in the intestinal epithelia.

Its subcellular location is the membrane. It localises to the cell junction. Its function is as follows. May negatively regulate activity of innexin gap junction protein inx-16, thereby mediating the rhythmic frequency of the defecation motor program. Required for the clustering of inx-16 to the cell-cell junction of the intestinal epithelia. Probably dispensable for intestinal integrity. May be a cytokine receptor. The polypeptide is Defecation cycle abnormal dec-7 (Caenorhabditis elegans).